The primary structure comprises 360 residues: Methyltransferase pvhD (360 aa).

S-adenosyl-L-methionine is bound by residues 201–202, D227, 251–252, R267, and R268; these read SG and DL.

The protein belongs to the class I-like SAM-binding methyltransferase superfamily. Cation-independent O-methyltransferase family.

It functions in the pathway secondary metabolite biosynthesis. In terms of biological role, methyltransferase; part of the gene cluster that mediates the biosynthesis of varicidin A, an antifungal natural product containing a cis-octahydrodecalin core. The PKS module of pvhA together with the enoylreductase pvhC catalyze the formation of the polyketide unit which is then conjugated to L-isoleucine by the condensation domain of the NRPS module. Activity of the Dieckmann cyclase domain (RED) of pvhA results in release of an acyclic tetramate. The cytochrome P450 monooxygenase pvhE then catalyzes the oxidation of the C21 methyl group to a to carboxylate group. The methyltransferase pvhD then further methylates the pvhE product. The Diels-Alderase pvhB is able to catalyze Diels-Alder cycloaddition using both pvhE and pvhD products as substrates to form the decalin ring, yielding varicidin B and A, respectively. The sequence is that of Methyltransferase pvhD from Talaromyces variabilis (Penicillium variabile).